Consider the following 157-residue polypeptide: F-box protein SNE (157 aa).

An F-box domain is found at 24–70; the sequence is PVFSINDHHDVLVEILRRLDGSSLCSAACVCRLWSAVARNDSIWEEL.

As to quaternary structure, part of a SCF (ASK-cullin-F-box) protein ligase complex. Interacts directly with SKP1A and SKP1B. As to expression, highly expressed in flowers and at much lower level in seedlings, rosette leaves and green siliques.

Its subcellular location is the nucleus. It functions in the pathway protein modification; protein ubiquitination. In terms of biological role, essential component of a SCF-type E3 ligase complex that positively regulates the gibberellin signaling pathway. Upon gibberellin treatment, such complex probably mediates the ubiquitination and subsequent degradation of DELLA proteins (GAI, RGA and RGL2), some repressors of the gibberellin pathway, leading to activate the pathway. Can partially complement the absence of GID2/SLY1. This Arabidopsis thaliana (Mouse-ear cress) protein is F-box protein SNE (SNE).